The following is a 486-amino-acid chain: Ribulose bisphosphate carboxylase large chain, plasmid (486 aa).

2 residues coordinate substrate: Asn126 and Thr176. Lys178 (proton acceptor) is an active-site residue. Lys180 provides a ligand contact to substrate. Mg(2+)-binding residues include Lys204, Asp206, and Glu207. At Lys204 the chain carries N6-carboxylysine. The Proton acceptor role is filled by His296. Residues Arg297, His329, and Ser381 each coordinate substrate.

It belongs to the RuBisCO large chain family. Type I subfamily. In terms of assembly, heterohexadecamer of 8 large chains and 8 small chains. The cofactor is Mg(2+).

The enzyme catalyses 2 (2R)-3-phosphoglycerate + 2 H(+) = D-ribulose 1,5-bisphosphate + CO2 + H2O. It catalyses the reaction D-ribulose 1,5-bisphosphate + O2 = 2-phosphoglycolate + (2R)-3-phosphoglycerate + 2 H(+). RuBisCO catalyzes two reactions: the carboxylation of D-ribulose 1,5-bisphosphate, the primary event in carbon dioxide fixation, as well as the oxidative fragmentation of the pentose substrate. Both reactions occur simultaneously and in competition at the same active site. This chain is Ribulose bisphosphate carboxylase large chain, plasmid (cbbL2), found in Cupriavidus necator (strain ATCC 17699 / DSM 428 / KCTC 22496 / NCIMB 10442 / H16 / Stanier 337) (Ralstonia eutropha).